The primary structure comprises 396 residues: Phosphopentomutase (396 aa).

Mn(2+) contacts are provided by Asp13, Asp288, His293, Asp329, His330, and His341.

This sequence belongs to the phosphopentomutase family. The cofactor is Mn(2+).

It is found in the cytoplasm. It carries out the reaction 2-deoxy-alpha-D-ribose 1-phosphate = 2-deoxy-D-ribose 5-phosphate. The enzyme catalyses alpha-D-ribose 1-phosphate = D-ribose 5-phosphate. It participates in carbohydrate degradation; 2-deoxy-D-ribose 1-phosphate degradation; D-glyceraldehyde 3-phosphate and acetaldehyde from 2-deoxy-alpha-D-ribose 1-phosphate: step 1/2. In terms of biological role, isomerase that catalyzes the conversion of deoxy-ribose 1-phosphate (dRib-1-P) and ribose 1-phosphate (Rib-1-P) to deoxy-ribose 5-phosphate (dRib-5-P) and ribose 5-phosphate (Rib-5-P), respectively. This chain is Phosphopentomutase, found in Clostridium perfringens (strain ATCC 13124 / DSM 756 / JCM 1290 / NCIMB 6125 / NCTC 8237 / Type A).